Here is a 391-residue protein sequence, read N- to C-terminus: Phosphoglycerate kinase (391 aa).

Substrate-binding positions include 21-23 (DLN), R36, 59-62 (HLGR), R113, and R146. ATP is bound by residues K197, E319, and 345 to 348 (GGDT).

It belongs to the phosphoglycerate kinase family. As to quaternary structure, monomer.

Its subcellular location is the cytoplasm. The enzyme catalyses (2R)-3-phosphoglycerate + ATP = (2R)-3-phospho-glyceroyl phosphate + ADP. It functions in the pathway carbohydrate degradation; glycolysis; pyruvate from D-glyceraldehyde 3-phosphate: step 2/5. This Shewanella piezotolerans (strain WP3 / JCM 13877) protein is Phosphoglycerate kinase.